The following is a 204-amino-acid chain: Guanylate kinase (204 aa).

The Guanylate kinase-like domain occupies 6–184; it reads GLLIVLSGPA…AVDRIKAIVT (179 aa). Residue 13-20 participates in ATP binding; sequence GPAGVGKG.

Belongs to the guanylate kinase family.

The protein localises to the cytoplasm. It catalyses the reaction GMP + ATP = GDP + ADP. Essential for recycling GMP and indirectly, cGMP. In Halalkalibacterium halodurans (strain ATCC BAA-125 / DSM 18197 / FERM 7344 / JCM 9153 / C-125) (Bacillus halodurans), this protein is Guanylate kinase (gmk).